A 175-amino-acid chain; its full sequence is Crossover junction endodeoxyribonuclease RuvC (175 aa).

Active-site residues include Asp16, Glu76, and Asp148. Mg(2+) contacts are provided by Asp16, Glu76, and Asp148.

This sequence belongs to the RuvC family. Homodimer which binds Holliday junction (HJ) DNA. The HJ becomes 2-fold symmetrical on binding to RuvC with unstacked arms; it has a different conformation from HJ DNA in complex with RuvA. In the full resolvosome a probable DNA-RuvA(4)-RuvB(12)-RuvC(2) complex forms which resolves the HJ. It depends on Mg(2+) as a cofactor.

It is found in the cytoplasm. It carries out the reaction Endonucleolytic cleavage at a junction such as a reciprocal single-stranded crossover between two homologous DNA duplexes (Holliday junction).. Functionally, the RuvA-RuvB-RuvC complex processes Holliday junction (HJ) DNA during genetic recombination and DNA repair. Endonuclease that resolves HJ intermediates. Cleaves cruciform DNA by making single-stranded nicks across the HJ at symmetrical positions within the homologous arms, yielding a 5'-phosphate and a 3'-hydroxyl group; requires a central core of homology in the junction. The consensus cleavage sequence is 5'-(A/T)TT(C/G)-3'. Cleavage occurs on the 3'-side of the TT dinucleotide at the point of strand exchange. HJ branch migration catalyzed by RuvA-RuvB allows RuvC to scan DNA until it finds its consensus sequence, where it cleaves and resolves the cruciform DNA. The chain is Crossover junction endodeoxyribonuclease RuvC from Bradyrhizobium diazoefficiens (strain JCM 10833 / BCRC 13528 / IAM 13628 / NBRC 14792 / USDA 110).